We begin with the raw amino-acid sequence, 914 residues long: Protein translocase subunit SecA (914 aa).

ATP contacts are provided by residues Gln-87, 105–109, and Asp-500; that span reads GEGKT. 4 residues coordinate Zn(2+): Cys-898, Cys-900, Cys-909, and His-910.

It belongs to the SecA family. In terms of assembly, monomer and homodimer. Part of the essential Sec protein translocation apparatus which comprises SecA, SecYEG and auxiliary proteins SecDF-YajC and YidC. The cofactor is Zn(2+).

The protein resides in the cell inner membrane. It is found in the cytoplasm. The enzyme catalyses ATP + H2O + cellular proteinSide 1 = ADP + phosphate + cellular proteinSide 2.. Functionally, part of the Sec protein translocase complex. Interacts with the SecYEG preprotein conducting channel. Has a central role in coupling the hydrolysis of ATP to the transfer of proteins into and across the cell membrane, serving as an ATP-driven molecular motor driving the stepwise translocation of polypeptide chains across the membrane. The protein is Protein translocase subunit SecA of Acidithiobacillus ferrooxidans (strain ATCC 23270 / DSM 14882 / CIP 104768 / NCIMB 8455) (Ferrobacillus ferrooxidans (strain ATCC 23270)).